The sequence spans 351 residues: Gene 58 protein (351 aa).

Helical transmembrane passes span 14–34 (FSTGLLASSSIVWSYIFATVF), 43–63 (QSVLYVWSLPIVQLAAIFCAV), 70–90 (LGLLLLLNCGIAFLSFISWSL), 97–117 (LVPGLFVINFLSLMIWLIVCF), 133–153 (LGFLASLTIHYCFNQFEIYLT), 155–175 (VMFAPFFICMLFGYIGFSHVW), 214–234 (LICLWFLLLAMAAGCIALVMF), 240–260 (GVSTYLYLFMVGNFCCGSLII), 268–288 (AVYSVVSLTAFFLILMGGYLF), 293–313 (LSMLAAVMFFCYFHANGCLLY), and 328–348 (FILNVCMLLNALLEITVLLAQ).

Belongs to the herpesviridae BMRF2 family.

Its subcellular location is the host membrane. The chain is Gene 58 protein (58) from Connochaetes taurinus (Blue wildebeest).